Consider the following 548-residue polypeptide: MEFAEFAARAAEIESEPADLETVDLVATLCADAGDDLGTVARFVQGRVFPAHDSTKLDIGPSLCYEALAKAAGPNVDSDDIERRLAEVGEIGAVAESLDLGGQQGLAAFGGGTDREALTVSGVEETLQALAAAAGDGSTDAKRDRLFDLFNRAEPTEARFLARLVLGEMRVGVGEGTVRDAIAAAFEVPEPDVERALQVANDCGLVAETARDDGAAGLDDIGLVVGRPVKAMLAQAGTAVEALDEWGTAAVETKYDGARVQVHYDGDSARLFSRNLEEVTEPLPEVVEFVEQSLSVPAILDGEVVAVDDDGTPRPFQEILRRFRRKHDVAAAREDVSVELYAFDCLHVDGEDLLDTPLSERHDRLESLLADGVSPLSYADDADEVADIEADALDAGHEGIMLKNPDSTYTPGSRGKNWLKRKPDVETLDLVVTGAEWGEGRRANLLGTFVVSARADDGYEPVGKVATGITDEELERLHERLQPHVRTEDGTDVDIEPAVVFEVGYEEIQQSPTYGSGYALRFPRFVGVREDKSPSDADSLERIDRLTS.

Glu-252 contributes to the ATP binding site. The active-site N6-AMP-lysine intermediate is the Lys-254. ATP-binding residues include Arg-259, Arg-274, Glu-303, Phe-343, Arg-414, and Lys-420.

It belongs to the ATP-dependent DNA ligase family. It depends on Mg(2+) as a cofactor.

The catalysed reaction is ATP + (deoxyribonucleotide)n-3'-hydroxyl + 5'-phospho-(deoxyribonucleotide)m = (deoxyribonucleotide)n+m + AMP + diphosphate.. Its function is as follows. DNA ligase that seals nicks in double-stranded DNA during DNA replication, DNA recombination and DNA repair. This chain is DNA ligase, found in Natronomonas pharaonis (strain ATCC 35678 / DSM 2160 / CIP 103997 / JCM 8858 / NBRC 14720 / NCIMB 2260 / Gabara) (Halobacterium pharaonis).